The following is a 748-amino-acid chain: Formate acetyltransferase (748 aa).

The PFL domain occupies 5-618 (NNHTNAWQGF…KTGNTPDGRK (614 aa)). The active-site S-acetylcysteine intermediate is the cysteine 412. Catalysis depends on cysteine 413, which acts as the Cysteine radical intermediate. One can recognise a Glycine radical domain in the interval 625–748 (PGANPMHGRD…VISRTFHESM (124 aa)). Glycine 723 carries the glycine radical modification.

This sequence belongs to the glycyl radical enzyme (GRE) family. PFL subfamily. In terms of assembly, homodimer.

The protein localises to the cytoplasm. The catalysed reaction is formate + acetyl-CoA = pyruvate + CoA. It participates in fermentation; pyruvate fermentation; formate from pyruvate: step 1/1. Functionally, catalyzes the conversion of pyruvate to formate and acetyl-CoA. The protein is Formate acetyltransferase (pflB) of Staphylococcus epidermidis (strain ATCC 35984 / DSM 28319 / BCRC 17069 / CCUG 31568 / BM 3577 / RP62A).